Here is a 187-residue protein sequence, read N- to C-terminus: UPF0301 protein KPK_0728 (187 aa).

This sequence belongs to the UPF0301 (AlgH) family.

This Klebsiella pneumoniae (strain 342) protein is UPF0301 protein KPK_0728.